Consider the following 237-residue polypeptide: MSFLKSFPPPGPAEGLLRQQPDTEAVLNGKGLGTGTLYIAESRLSWLDGSGLGFSLEYPTISLHALSRDRSDCLGEHLYVMVNAKFEEESKEPVADEEEEDSDDDVEPITEFRFVPSDKSALEAMFTAMCECQALHPDPEDEDSDDYDGEEYDVEAHEQGQGDIPTFYTYEEGLSHLTAEGQATLERLEGMLSQSVSSQYNMAGVRTEDSIRDYEDGMEVDTTPTVAGQFEDADVDH.

Ser2 carries the N-acetylserine modification. Residues Ser102, Ser144, Ser193, Ser195, Ser198, and Ser210 each carry the phosphoserine modification. Residues 135 to 159 form a disordered region; the sequence is LHPDPEDEDSDDYDGEEYDVEAHEQ. A compositionally biased stretch (acidic residues) spans 139-153; sequence PEDEDSDDYDGEEYD. A Phosphothreonine modification is found at Thr223.

Belongs to the pICln (TC 1.A.47) family. Component of the methylosome, a 20S complex containing at least PRMT5/SKB1, WDR77/MEP50 and CLNS1A/pICln. May mediate SNRPD1 and SNRPD3 methylation. Forms a 6S pICln-Sm complex composed of CLNS1A/pICln, SNRPD1, SNRPD2, SNRPE, SNRPF and SNRPG; ring-like structure where CLNS1A/pICln mimics additional Sm proteins and which is unable to assemble into the core snRNP. Interacts with LSM10 and LSM11.

The protein resides in the cytoplasm. It localises to the cytosol. The protein localises to the nucleus. It is found in the cytoskeleton. Involved in both the assembly of spliceosomal snRNPs and the methylation of Sm proteins. Chaperone that regulates the assembly of spliceosomal U1, U2, U4 and U5 small nuclear ribonucleoproteins (snRNPs), the building blocks of the spliceosome, and thereby plays an important role in the splicing of cellular pre-mRNAs. Most spliceosomal snRNPs contain a common set of Sm proteins SNRPB, SNRPD1, SNRPD2, SNRPD3, SNRPE, SNRPF and SNRPG that assemble in a heptameric protein ring on the Sm site of the small nuclear RNA to form the core snRNP (Sm core). In the cytosol, the Sm proteins SNRPD1, SNRPD2, SNRPE, SNRPF and SNRPG are trapped in an inactive 6S pICln-Sm complex by the chaperone CLNS1A that controls the assembly of the core snRNP. Dissociation by the SMN complex of CLNS1A from the trapped Sm proteins and their transfer to an SMN-Sm complex triggers the assembly of core snRNPs and their transport to the nucleus. The polypeptide is Methylosome subunit pICln (CLNS1A) (Homo sapiens (Human)).